The sequence spans 592 residues: UPF0329 protein ECU01_0110/ECU01_1500/ECU08_0040 (592 aa).

Composition is skewed to basic and acidic residues over residues 306-339 and 353-362; these read RQRRREREIEKNMKELMRDEEKAKSKEKAKSKEK and EAKEEEKKES. A disordered region spans residues 306 to 404; sequence RQRRREREIE…RKRYKIHRRV (99 aa).

It belongs to the UPF0329 family.

The sequence is that of UPF0329 protein ECU01_0110/ECU01_1500/ECU08_0040 from Encephalitozoon cuniculi (strain GB-M1) (Microsporidian parasite).